Here is a 36-residue protein sequence, read N- to C-terminus: Glucagon-1 (36 aa).

It belongs to the glucagon family.

The protein resides in the secreted. Its function is as follows. Promotes hydrolysis of glycogen and lipids, and raises the blood sugar level. The chain is Glucagon-1 (gcg1) from Oreochromis niloticus (Nile tilapia).